Here is a 278-residue protein sequence, read N- to C-terminus: MSALGSPVRAYDFLLKFLLVGDSDVGKGEILASLQDGAAESPYGHPAGIDYKTTTILLDGRRVKLQLWDTSGQGRFCTIFRSYSRGAQGVILVYDIANRWSFDGIDRWIKEIDEHAPGVPKILVGNRLHLAFKRQVPTEQAQAYAERLGVTFFEVSPLCNFNITESFTELARIVLLRHGMDRLWRPSKVLSLQDLCCRAVVSCTPVHLVDKLPLPIALRSHLKSFSMANGLNARMMHGGSYSLTTSSTHKRSSLRKVKLVRPPQSPPKNCTRNSCKIS.

Positions 23, 26, and 27 each coordinate GTP. The switch-I stretch occupies residues 41–49 (SPYGHPAGI). Asp-69 serves as a coordination point for Mg(2+). Residues Gly-72, Asn-126, and Arg-127 each coordinate GTP. A switch-II region spans residues 72–88 (GQGRFCTIFRSYSRGAQ). The 54-residue stretch at 175–228 (LLRHGMDRLWRPSKVLSLQDLCCRAVVSCTPVHLVDKLPLPIALRSHLKSFSMA) folds into the SOCS box domain. The segment at 242 to 278 (SLTTSSTHKRSSLRKVKLVRPPQSPPKNCTRNSCKIS) is disordered. Residues 248–259 (THKRSSLRKVKL) show a composition bias toward basic residues. The span at 267–278 (PKNCTRNSCKIS) shows a compositional bias: polar residues. A lipid anchor (S-palmitoyl cysteine) is attached at Cys-270. Cys-275 carries the S-geranylgeranyl cysteine lipid modification.

It belongs to the small GTPase superfamily. Rab family. As to quaternary structure, component of the cullin-5-RING E3 ubiquitin-protein ligase complex (ECS(RAB40B) complex) composed of CUL5, Elongin BC (ELOB and ELOC), RNF7/RBX2 and RAB40B; RAB40B interaction with ECS complex is GTP-independent. Binds (GTP-bound) LIMA1; interaction promotes LIMA1 subcellular localization in lamellipodia during cell migration. Interacts (GTP-bound) with TKS5/SH3PXD2A (via PX domain); interaction promotes invadopodia-mediated extracellular matrix degradation. Mg(2+) serves as cofactor.

It localises to the cell membrane. It is found in the cytoplasm. The protein localises to the cytosol. Its subcellular location is the cell projection. The protein resides in the lamellipodium membrane. It localises to the ruffle. The catalysed reaction is GTP + H2O = GDP + phosphate + H(+). The protein operates within protein modification; protein ubiquitination. Regulated by guanine nucleotide exchange factors (GEFs) which promote the exchange of bound GDP for free GTP. Regulated by GTPase activating proteins (GAPs) which increase the GTP hydrolysis activity. Inhibited by GDP dissociation inhibitors (GDIs). RAB40B small GTPase acts as substrate-recognition components of the ECS(RAB40B) E3 ubiquitin ligase complex which mediates the ubiquitination of target proteins. The Rab40 subfamily belongs to the Rab family that are key regulators of intracellular membrane trafficking, from the formation of transport vesicles to their fusion with membranes. Rabs cycle between an inactive GDP-bound form and an active GTP-bound form that is able to recruit to membranes different sets of downstream effectors directly responsible for vesicle formation, movement, tethering and fusion. As part of the ECS(RAB40B) complex, GTP-bound RAB40B promotes LIMA1/EPLIN ubiquitination and degradation, thereby regulating leading-edge actin dynamics during cell migration. As part of the ECS(RAB40B) complex, GTP-bound RAB40B also ubiquitinates RAP2A GTPase which promotes its localization to lamellipodia and activation to drive cell migration. The ECS(RAB40B) complex does not mediate canonical ubiquitin-dependent degradation of RAP2. RAB40B also binds TKS5/SH3PXD2A effector independently from ECS complex to promote invadopodia-mediated extracellular matrix degradation. The protein is Ras-related protein Rab-40B of Homo sapiens (Human).